The primary structure comprises 582 residues: Formate--tetrahydrofolate ligase (582 aa).

65 to 72 (TPLGEGKT) serves as a coordination point for ATP.

Belongs to the formate--tetrahydrofolate ligase family.

It catalyses the reaction (6S)-5,6,7,8-tetrahydrofolate + formate + ATP = (6R)-10-formyltetrahydrofolate + ADP + phosphate. Its pathway is one-carbon metabolism; tetrahydrofolate interconversion. The polypeptide is Formate--tetrahydrofolate ligase (Vibrio parahaemolyticus serotype O3:K6 (strain RIMD 2210633)).